The following is a 513-amino-acid chain: Histidine ammonia-lyase (513 aa).

The 5-imidazolinone (Ala-Gly) cross-link spans 144–146; it reads ASG. A 2,3-didehydroalanine (Ser) modification is found at serine 145.

The protein belongs to the PAL/histidase family. In terms of processing, contains an active site 4-methylidene-imidazol-5-one (MIO), which is formed autocatalytically by cyclization and dehydration of residues Ala-Ser-Gly.

It localises to the cytoplasm. It catalyses the reaction L-histidine = trans-urocanate + NH4(+). It participates in amino-acid degradation; L-histidine degradation into L-glutamate; N-formimidoyl-L-glutamate from L-histidine: step 1/3. This chain is Histidine ammonia-lyase, found in Streptococcus sanguinis (strain SK36).